A 165-amino-acid chain; its full sequence is Lipoprotein signal peptidase (165 aa).

3 helical membrane-spanning segments follow: residues 9–29 (PFLW…LAVV), 65–85 (WQKY…LFFL), and 97–119 (TGYA…HGFV). Catalysis depends on residues aspartate 121 and aspartate 139. A helical membrane pass occupies residues 134–154 (VFNVADIAICIGAGLLAIDAF).

Belongs to the peptidase A8 family.

It is found in the cell inner membrane. It carries out the reaction Release of signal peptides from bacterial membrane prolipoproteins. Hydrolyzes -Xaa-Yaa-Zaa-|-(S,diacylglyceryl)Cys-, in which Xaa is hydrophobic (preferably Leu), and Yaa (Ala or Ser) and Zaa (Gly or Ala) have small, neutral side chains.. The protein operates within protein modification; lipoprotein biosynthesis (signal peptide cleavage). In terms of biological role, this protein specifically catalyzes the removal of signal peptides from prolipoproteins. The chain is Lipoprotein signal peptidase from Histophilus somni (strain 2336) (Haemophilus somnus).